Here is a 353-residue protein sequence, read N- to C-terminus: D-alanine--D-alanine ligase (353 aa).

The 209-residue stretch at 141–349 folds into the ATP-grasp domain; sequence KAAFAAAGLP…LPDLVAQLVH (209 aa). 176-231 provides a ligand contact to ATP; the sequence is EAELGYPCFVKPANMGSSVGISKARHRDQLLAGLKEAARHDTRLVVEHGVSARELE. Mg(2+) is bound by residues D302, E316, and N318.

It belongs to the D-alanine--D-alanine ligase family. It depends on Mg(2+) as a cofactor. The cofactor is Mn(2+).

It is found in the cytoplasm. The catalysed reaction is 2 D-alanine + ATP = D-alanyl-D-alanine + ADP + phosphate + H(+). It functions in the pathway cell wall biogenesis; peptidoglycan biosynthesis. Cell wall formation. The chain is D-alanine--D-alanine ligase from Synechococcus sp. (strain CC9311).